Here is a 747-residue protein sequence, read N- to C-terminus: Phenylalanine ammonia-lyase 2 (747 aa).

Positions 1–20 (MTILSGTTAAPRVNGTTMNG) are enriched in polar residues. Residues 1-47 (MTILSGTTAAPRVNGTTMNGHSKPHTNGVHLNGHAPKATTESPWPQS) form a disordered region. Y124 acts as the Proton donor/acceptor in catalysis. The segment at residues 229–231 (ASG) is a cross-link (5-imidazolinone (Ala-Gly)). S230 carries the 2,3-didehydroalanine (Ser) modification. (E)-cinnamate is bound by residues N290, Q380, R386, N416, K487, E515, and N518.

It belongs to the PAL/histidase family. In terms of assembly, homotetramer. In terms of processing, contains an active site 4-methylidene-imidazol-5-one (MIO), which is formed autocatalytically by cyclization and dehydration of residues Ala-Ser-Gly.

It localises to the cytoplasm. The catalysed reaction is L-phenylalanine = (E)-cinnamate + NH4(+). It functions in the pathway phenylpropanoid metabolism; trans-cinnamate biosynthesis; trans-cinnamate from L-phenylalanine: step 1/1. Its function is as follows. Catalyzes the non-oxidative deamination of L-phenylalanine to form trans-cinnamic acid and a free ammonium ion. Facilitates the commitment step in phenylpropanoid pathways that produce secondary metabolites such as lignins, coumarins and flavonoids. The chain is Phenylalanine ammonia-lyase 2 from Pleurotus ostreatus (Oyster mushroom).